A 1025-amino-acid polypeptide reads, in one-letter code: Dihydropyrimidine dehydrogenase [NADP(+)] (1025 aa).

Residues glutamate 69–phenylalanine 100 enclose the 4Fe-4S ferredoxin-type 1 domain. Positions 79, 82, 87, and 91 each coordinate [4Fe-4S] cluster. Valine 129 lines the FAD pocket. [4Fe-4S] cluster is bound by residues cysteine 130, cysteine 136, cysteine 140, and glutamine 156. FAD-binding positions include glycine 194 to alanine 198, glutamate 218 to isoleucine 226, arginine 235, and leucine 261. NADP(+) contacts are provided by residues alanine 340 to threonine 343, arginine 364 to lysine 365, and arginine 371. Lysine 384 is subject to N6-acetyllysine. NADP(+)-binding positions include alanine 437–glycine 439 and aspartate 481–asparagine 487. An FAD-binding site is contributed by glycine 480 to threonine 489. FMN contacts are provided by residues serine 550 and lysine 574 to threonine 575. Residues asparagine 609 and asparagine 668 to serine 670 contribute to the substrate site. The active-site Proton acceptor is the cysteine 671. Lysine 709 is a binding site for FMN. Asparagine 736 to threonine 737 contributes to the substrate binding site. Residues glycine 767, threonine 793–glycine 795, and cysteine 816–serine 817 each bind FMN. 2 consecutive 4Fe-4S ferredoxin-type domains span residues valine 944–glutamate 976 and histidine 978–arginine 1007. The [4Fe-4S] cluster site is built by cysteine 953, cysteine 956, cysteine 959, cysteine 963, cysteine 986, cysteine 989, cysteine 992, and cysteine 996.

The protein belongs to the dihydropyrimidine dehydrogenase family. As to quaternary structure, homodimer. It depends on FAD as a cofactor. The cofactor is FMN. [4Fe-4S] cluster is required as a cofactor.

The protein localises to the cytoplasm. It catalyses the reaction 5,6-dihydrouracil + NADP(+) = uracil + NADPH + H(+). It carries out the reaction 5,6-dihydrothymine + NADP(+) = thymine + NADPH + H(+). It functions in the pathway amino-acid biosynthesis; beta-alanine biosynthesis. With respect to regulation, inactivated by 5-iodouracil. In terms of biological role, involved in pyrimidine base degradation. Catalyzes the reduction of uracil and thymine. Also involved the degradation of the chemotherapeutic drug 5-fluorouracil. The chain is Dihydropyrimidine dehydrogenase [NADP(+)] (DPYD) from Bos taurus (Bovine).